We begin with the raw amino-acid sequence, 843 residues long: Probable disease resistance protein At5g47250 (843 aa).

The stretch at 28–58 (MLKENLVLLKSAFDELKAEKEDVVNRVNAGE) forms a coiled coil. Residues 141–440 (TEQPPPPVVE…GEGFIDEKDG (300 aa)) form the NB-ARC domain. Residue 183–190 (GMGGVGKT) coordinates ATP. LRR repeat units follow at residues 510–531 (TVTKMSLFNNEIKNIPDDPEFP), 535–556 (NLVTLFLQNNRLVDIVGKFFLV), 559–581 (TLVVLDLSWNFQITELPKGISAL), 583–604 (SLRLLNLSGTSIKHLPEGLGVL), and 606–628 (KLIHLNLESTSNLRSVGLISELQ).

This sequence belongs to the disease resistance NB-LRR family.

In terms of biological role, probable disease resistance protein. The sequence is that of Probable disease resistance protein At5g47250 from Arabidopsis thaliana (Mouse-ear cress).